Reading from the N-terminus, the 316-residue chain is Sorting nexin-20 (316 aa).

Positions 1–57 (MASHKHPGSPGWTGPICQDMAGTTPKASAPRPDLPRPGPEDHLEAQGSPSSNSSMTT) are disordered. At Ser-3 the chain carries Phosphoserine. Polar residues predominate over residues 47-57 (GSPSSNSSMTT). The PX domain maps to 74-191 (VKLLFEIASA…DFLTRPELKE (118 aa)). A 1,2-diacyl-sn-glycero-3-phospho-(1D-myo-inositol-3-phosphate) contacts are provided by Arg-116, Ser-118, Lys-143, and Arg-157.

This sequence belongs to the sorting nexin family. Interacts with SELPLG. Interaction with SELPLG is controversial.

Its subcellular location is the early endosome membrane. It is found in the cell membrane. The protein resides in the cytoplasm. The protein localises to the nucleus. Functionally, may play a role in cellular vesicle trafficking. Has been proposed to function as a sorting protein that targets SELPLG into endosomes, but has no effect on SELPLG internalization from the cell surface, or on SELPLG-mediated cell-cell adhesion. This chain is Sorting nexin-20 (SNX20), found in Bos taurus (Bovine).